The chain runs to 429 residues: Adenylosuccinate synthetase (429 aa).

GTP is bound by residues 12-18 and 40-42; these read GDEGKGK and GHT. Asp-13 functions as the Proton acceptor in the catalytic mechanism. The Mg(2+) site is built by Asp-13 and Gly-40. IMP contacts are provided by residues 13–16, 38–41, Thr-128, Arg-142, Gln-224, Thr-239, and Arg-303; these read DEGK and NAGH. Residue His-41 is the Proton donor of the active site. Position 299–305 (299–305) interacts with substrate; it reads VTTGRPR. Residues Arg-305, 331-333, and 413-415 each bind GTP; these read LLD and SVG.

It belongs to the adenylosuccinate synthetase family. In terms of assembly, homodimer. Mg(2+) serves as cofactor.

Its subcellular location is the cytoplasm. The catalysed reaction is IMP + L-aspartate + GTP = N(6)-(1,2-dicarboxyethyl)-AMP + GDP + phosphate + 2 H(+). Its pathway is purine metabolism; AMP biosynthesis via de novo pathway; AMP from IMP: step 1/2. Plays an important role in the de novo pathway of purine nucleotide biosynthesis. Catalyzes the first committed step in the biosynthesis of AMP from IMP. This chain is Adenylosuccinate synthetase, found in Clostridioides difficile (strain 630) (Peptoclostridium difficile).